A 56-amino-acid polypeptide reads, in one-letter code: Large ribosomal subunit protein bL33 (56 aa).

This sequence belongs to the bacterial ribosomal protein bL33 family.

The sequence is that of Large ribosomal subunit protein bL33 from Rickettsia bellii (strain OSU 85-389).